The chain runs to 337 residues: MSQQFNVAIFGATGAVGETMLEVLQEREFPVDELFLLASERSEGKTYRFNGKTVRVQNVEEFDWSQVHIALFSAGGELSAKWAPIAAEAGVVVIDNTSHFRYDYDIPLVVPEVNPEAIAEFRNRNIIANPNCSTIQMLVALKPIYDAVGIERINVTTYQSVSGAGKAGIDELAGQTAKLLNGYPAETNTFSQQIAFNCIPQIDQFMDNGYTKEEMKMVWETQKIFNDPSIMVNPTCVRVPVFYGHAEAVHVETRAPIDAEQVMDMLEQTDGIELFRGADFPTQVRDAGGKDHVLVGRVRNDISHHSGINLWVVADNVRKGAATNAVQIAELLVRDYF.

Residues 13 to 16 (TGAV) and 41 to 42 (RS) contribute to the NADP(+) site. R101 is a binding site for phosphate. The active-site Acyl-thioester intermediate is C132. Q159 is a substrate binding site. 162–163 (SG) serves as a coordination point for NADP(+). A phosphate-binding site is contributed by K216. R238 is a substrate binding site. The active-site Proton acceptor is the H245. NADP(+) is bound at residue N316.

This sequence belongs to the aspartate-semialdehyde dehydrogenase family. In terms of assembly, homodimer.

It catalyses the reaction L-aspartate 4-semialdehyde + phosphate + NADP(+) = 4-phospho-L-aspartate + NADPH + H(+). The protein operates within amino-acid biosynthesis; L-lysine biosynthesis via DAP pathway; (S)-tetrahydrodipicolinate from L-aspartate: step 2/4. It functions in the pathway amino-acid biosynthesis; L-methionine biosynthesis via de novo pathway; L-homoserine from L-aspartate: step 2/3. It participates in amino-acid biosynthesis; L-threonine biosynthesis; L-threonine from L-aspartate: step 2/5. Catalyzes the NADPH-dependent formation of L-aspartate-semialdehyde (L-ASA) by the reductive dephosphorylation of L-aspartyl-4-phosphate. This chain is Aspartate-semialdehyde dehydrogenase 2 (asd2), found in Vibrio cholerae serotype O1 (strain ATCC 39315 / El Tor Inaba N16961).